Reading from the N-terminus, the 165-residue chain is Urease accessory protein UreE (165 aa).

It belongs to the UreE family.

It is found in the cytoplasm. Functionally, involved in urease metallocenter assembly. Binds nickel. Probably functions as a nickel donor during metallocenter assembly. The chain is Urease accessory protein UreE from Flavobacterium johnsoniae (strain ATCC 17061 / DSM 2064 / JCM 8514 / BCRC 14874 / CCUG 350202 / NBRC 14942 / NCIMB 11054 / UW101) (Cytophaga johnsonae).